A 356-amino-acid chain; its full sequence is uncharacterized protein (356 aa).

This is an uncharacterized protein from Saccharolobus islandicus (Sulfolobus islandicus).